We begin with the raw amino-acid sequence, 189 residues long: Thermostable direct hemolysin-related (189 aa).

The signal sequence occupies residues 1–24 (MKYRYFAKKSFLFISMLAAFKTFA). C175 and C185 are disulfide-bonded.

The protein belongs to the TDH hemolysin family. As to quaternary structure, homodimer.

Its function is as follows. Bacterial hemolysins are exotoxins that attack blood cell membranes and cause cell rupture by mechanisms not clearly defined. The protein is Thermostable direct hemolysin-related (tdh3) of Vibrio parahaemolyticus.